Reading from the N-terminus, the 247-residue chain is Peroxisomal membrane protein 11A (247 aa).

Residues 1 to 83 (MDAFIRFTNQ…SVRATDLVPR (83 aa)) lie on the Cytoplasmic side of the membrane. The helical transmembrane segment at 84–105 (ICLTLASLNRVIYFICDTVLFV) threads the bilayer. Residues 106–219 (RSTGLASGVN…DQLGIYKSNP (114 aa)) are Lumenal-facing. The chain crosses the membrane as a helical span at residues 220-239 (GIIGLGGLVSSVAGIITVAY). The tract at residues 220 to 239 (GIIGLGGLVSSVAGIITVAY) is required for homodimerization, interaction with PEX11G, and peroxisomal localization. Over 240–247 (PQMKLKTQ) the chain is Cytoplasmic.

The protein belongs to the peroxin-11 family. As to quaternary structure, homodimer. Heterodimer with PEX11G. Probably interacts with COPB2 and COPA. Interacts with PEX19. Interacts with FIS1.

It is found in the peroxisome membrane. In terms of biological role, may be involved in peroxisomal proliferation and may regulate peroxisomes division. May mediate binding of coatomer proteins to the peroxisomal membrane. Promotes membrane protrusion and elongation on the peroxisomal surface. This Bos taurus (Bovine) protein is Peroxisomal membrane protein 11A (PEX11A).